Consider the following 32-residue polypeptide: Chaperone protein DnaK (32 aa).

It belongs to the heat shock protein 70 family.

Its function is as follows. Acts as a chaperone. This chain is Chaperone protein DnaK, found in Anabaena sp. (strain L31).